The following is a 359-amino-acid chain: Protein mab-21-like 2-B (359 aa).

Belongs to the mab-21 family.

Its subcellular location is the nucleus. It localises to the cytoplasm. Functionally, required for several aspects of embryonic development including normal development of the eye. The protein is Protein mab-21-like 2-B (mab21l2-b) of Xenopus laevis (African clawed frog).